The chain runs to 192 residues: Xanthine phosphoribosyltransferase (192 aa).

Leu-20 and Asn-27 together coordinate xanthine. 128–132 (ANGQA) is a 5-phospho-alpha-D-ribose 1-diphosphate binding site. Residue Lys-156 participates in xanthine binding.

This sequence belongs to the purine/pyrimidine phosphoribosyltransferase family. Xpt subfamily. In terms of assembly, homodimer.

It is found in the cytoplasm. The catalysed reaction is XMP + diphosphate = xanthine + 5-phospho-alpha-D-ribose 1-diphosphate. It participates in purine metabolism; XMP biosynthesis via salvage pathway; XMP from xanthine: step 1/1. Functionally, converts the preformed base xanthine, a product of nucleic acid breakdown, to xanthosine 5'-monophosphate (XMP), so it can be reused for RNA or DNA synthesis. In Lacticaseibacillus casei (strain BL23) (Lactobacillus casei), this protein is Xanthine phosphoribosyltransferase.